The primary structure comprises 96 residues: ATP synthase subunit c (96 aa).

2 consecutive transmembrane segments (helical) span residues 24–44 (HVGA…VGVG) and 75–95 (AIAE…IFVA).

Belongs to the ATPase C chain family. As to quaternary structure, F-type ATPases have 2 components, F(1) - the catalytic core - and F(0) - the membrane proton channel. F(1) has five subunits: alpha(3), beta(3), gamma(1), delta(1), epsilon(1). F(0) has three main subunits: a(1), b(2) and c(10-14). The alpha and beta chains form an alternating ring which encloses part of the gamma chain. F(1) is attached to F(0) by a central stalk formed by the gamma and epsilon chains, while a peripheral stalk is formed by the delta and b chains.

Its subcellular location is the cell membrane. F(1)F(0) ATP synthase produces ATP from ADP in the presence of a proton or sodium gradient. F-type ATPases consist of two structural domains, F(1) containing the extramembraneous catalytic core and F(0) containing the membrane proton channel, linked together by a central stalk and a peripheral stalk. During catalysis, ATP synthesis in the catalytic domain of F(1) is coupled via a rotary mechanism of the central stalk subunits to proton translocation. In terms of biological role, key component of the F(0) channel; it plays a direct role in translocation across the membrane. A homomeric c-ring of between 10-14 subunits forms the central stalk rotor element with the F(1) delta and epsilon subunits. This chain is ATP synthase subunit c, found in Mycoplasmoides gallisepticum (strain R(low / passage 15 / clone 2)) (Mycoplasma gallisepticum).